The primary structure comprises 21 residues: FLNPFRWVINKYREWKNKKDS.

The residue at position 21 (Ser21) is a Serine amide.

In terms of tissue distribution, expressed by the venom gland.

The protein localises to the secreted. The protein is Cupiennin-6e of Cupiennius salei (American wandering spider).